A 564-amino-acid chain; its full sequence is Dihydroxy-acid dehydratase (564 aa).

Residue cysteine 55 participates in [2Fe-2S] cluster binding. Residue aspartate 87 coordinates Mg(2+). Cysteine 128 lines the [2Fe-2S] cluster pocket. Residues aspartate 129 and lysine 130 each contribute to the Mg(2+) site. The residue at position 130 (lysine 130) is an N6-carboxylysine. [2Fe-2S] cluster is bound at residue cysteine 200. Residue glutamate 452 participates in Mg(2+) binding. The active-site Proton acceptor is serine 478.

The protein belongs to the IlvD/Edd family. Homodimer. The cofactor is [2Fe-2S] cluster. Requires Mg(2+) as cofactor.

It catalyses the reaction (2R)-2,3-dihydroxy-3-methylbutanoate = 3-methyl-2-oxobutanoate + H2O. The enzyme catalyses (2R,3R)-2,3-dihydroxy-3-methylpentanoate = (S)-3-methyl-2-oxopentanoate + H2O. The protein operates within amino-acid biosynthesis; L-isoleucine biosynthesis; L-isoleucine from 2-oxobutanoate: step 3/4. It participates in amino-acid biosynthesis; L-valine biosynthesis; L-valine from pyruvate: step 3/4. In terms of biological role, functions in the biosynthesis of branched-chain amino acids. Catalyzes the dehydration of (2R,3R)-2,3-dihydroxy-3-methylpentanoate (2,3-dihydroxy-3-methylvalerate) into 2-oxo-3-methylpentanoate (2-oxo-3-methylvalerate) and of (2R)-2,3-dihydroxy-3-methylbutanoate (2,3-dihydroxyisovalerate) into 2-oxo-3-methylbutanoate (2-oxoisovalerate), the penultimate precursor to L-isoleucine and L-valine, respectively. The sequence is that of Dihydroxy-acid dehydratase from Polaromonas naphthalenivorans (strain CJ2).